A 131-amino-acid polypeptide reads, in one-letter code: Hyastatin (131 aa).

An N-terminal signal peptide occupies residues Met-1–Ala-16. Cystine bridges form between Cys-103-Cys-117, Cys-107-Cys-124, and Cys-118-Cys-125. Lys-130 carries the post-translational modification Lysine amide.

As to expression, strongly expressed in hemocytes, with weaker expression in gills and epidermis. Expressed at low levels in hepatopancreas.

It localises to the cytoplasmic granule. In terms of biological role, antimicrobial peptide. Has strong antibacterial activity against the Gram-positive bacterium C.glutamicum (MIC=0.4 uM) and the Gram-negative bacterium E.coli (MIC=12.5 uM). Has weak antibacterial activity against the Gram-positive bacterium S.aureus (MIC&gt;50 uM) and the Gram-negative bacterium P.aeruginosa (MIC&gt;50 uM). Has antifungal activity against S.cerevisiae (MIC=12.5) and C.albicans (MIC=6.3 uM). Has weak antifungal activity against the mold B.cinerea. Presents chitin-binding activity. In Hyas araneus (Atlantic lyre crab), this protein is Hyastatin.